Reading from the N-terminus, the 373-residue chain is 8-amino-7-oxononanoate synthase (373 aa).

Residue R16 coordinates substrate. Position 93–94 (93–94 (GF)) interacts with pyridoxal 5'-phosphate. H118 contacts substrate. Residues S165, 190 to 193 (DEAH), and 222 to 225 (TFSK) each bind pyridoxal 5'-phosphate. K225 is modified (N6-(pyridoxal phosphate)lysine). T334 provides a ligand contact to substrate.

Belongs to the class-II pyridoxal-phosphate-dependent aminotransferase family. BioF subfamily. Homodimer. Requires pyridoxal 5'-phosphate as cofactor.

It carries out the reaction 6-carboxyhexanoyl-[ACP] + L-alanine + H(+) = (8S)-8-amino-7-oxononanoate + holo-[ACP] + CO2. The protein operates within cofactor biosynthesis; biotin biosynthesis. Functionally, catalyzes the decarboxylative condensation of pimeloyl-[acyl-carrier protein] and L-alanine to produce 8-amino-7-oxononanoate (AON), [acyl-carrier protein], and carbon dioxide. This is 8-amino-7-oxononanoate synthase from Helicobacter pylori (strain J99 / ATCC 700824) (Campylobacter pylori J99).